The following is a 98-amino-acid chain: Protein FAM24A (98 aa).

The signal sequence occupies residues 1-29 (MFDLRTKVMIGIASTLLIAAIMLITLVFC).

Belongs to the FAM24 family.

The protein resides in the secreted. This chain is Protein FAM24A (Fam24a), found in Mus musculus (Mouse).